Reading from the N-terminus, the 336-residue chain is Dihydroorotate dehydrogenase (quinone) (336 aa).

Residues 62 to 66 (AGLDK) and Thr-86 each bind FMN. Lys-66 is a substrate binding site. Residue 111-115 (NRMGF) participates in substrate binding. FMN-binding residues include Asn-139 and Asn-172. Residue Asn-172 coordinates substrate. Ser-175 acts as the Nucleophile in catalysis. Asn-177 contributes to the substrate binding site. FMN-binding residues include Lys-217 and Thr-245. 246–247 (NT) contacts substrate. Residues Gly-268, Gly-297, and 318–319 (YS) contribute to the FMN site.

Belongs to the dihydroorotate dehydrogenase family. Type 2 subfamily. As to quaternary structure, monomer. FMN is required as a cofactor.

The protein localises to the cell membrane. It catalyses the reaction (S)-dihydroorotate + a quinone = orotate + a quinol. Its pathway is pyrimidine metabolism; UMP biosynthesis via de novo pathway; orotate from (S)-dihydroorotate (quinone route): step 1/1. In terms of biological role, catalyzes the conversion of dihydroorotate to orotate with quinone as electron acceptor. The polypeptide is Dihydroorotate dehydrogenase (quinone) (Edwardsiella ictaluri (strain 93-146)).